The sequence spans 159 residues: SsrA-binding protein (159 aa).

Belongs to the SmpB family.

It is found in the cytoplasm. In terms of biological role, required for rescue of stalled ribosomes mediated by trans-translation. Binds to transfer-messenger RNA (tmRNA), required for stable association of tmRNA with ribosomes. tmRNA and SmpB together mimic tRNA shape, replacing the anticodon stem-loop with SmpB. tmRNA is encoded by the ssrA gene; the 2 termini fold to resemble tRNA(Ala) and it encodes a 'tag peptide', a short internal open reading frame. During trans-translation Ala-aminoacylated tmRNA acts like a tRNA, entering the A-site of stalled ribosomes, displacing the stalled mRNA. The ribosome then switches to translate the ORF on the tmRNA; the nascent peptide is terminated with the 'tag peptide' encoded by the tmRNA and targeted for degradation. The ribosome is freed to recommence translation, which seems to be the essential function of trans-translation. This Salinispora tropica (strain ATCC BAA-916 / DSM 44818 / JCM 13857 / NBRC 105044 / CNB-440) protein is SsrA-binding protein.